Consider the following 118-residue polypeptide: MKIVALTLVAFVALAGASCPYAAPAPAYPAPAAPSGYPAPPCPTNYLFSCQPNLAPAPCAQEAQAPAYGSAGAYTEQVPHYVGSPNREQVQQFHQRIGMAALMEELRGLGQGIQGQQY.

The N-terminal stretch at 1–17 (MKIVALTLVAFVALAGA) is a signal peptide. A VM domain is found at 36-75 (GYPAPPCPTNYLFSCQPNLAPAPCAQEAQAPAYGSAGAYT).

Belongs to the vitelline membrane family.

It is found in the secreted. Functionally, major early eggshell protein. The sequence is that of Vitelline membrane protein Vm32E from Drosophila simulans (Fruit fly).